Reading from the N-terminus, the 1400-residue chain is DNA-directed RNA polymerase subunit beta' (1400 aa).

Residues cysteine 70, cysteine 72, cysteine 85, and cysteine 88 each contribute to the Zn(2+) site. Aspartate 460, aspartate 462, and aspartate 464 together coordinate Mg(2+). Cysteine 814, cysteine 887, cysteine 894, and cysteine 897 together coordinate Zn(2+).

Belongs to the RNA polymerase beta' chain family. As to quaternary structure, the RNAP catalytic core consists of 2 alpha, 1 beta, 1 beta' and 1 omega subunit. When a sigma factor is associated with the core the holoenzyme is formed, which can initiate transcription. It depends on Mg(2+) as a cofactor. The cofactor is Zn(2+).

It carries out the reaction RNA(n) + a ribonucleoside 5'-triphosphate = RNA(n+1) + diphosphate. DNA-dependent RNA polymerase catalyzes the transcription of DNA into RNA using the four ribonucleoside triphosphates as substrates. In Marinomonas sp. (strain MWYL1), this protein is DNA-directed RNA polymerase subunit beta'.